The primary structure comprises 203 residues: Dephospho-CoA kinase (203 aa).

The DPCK domain maps to 4 to 203; that stretch reads VIGITGGIAT…EEGYIQSESE (200 aa). 12 to 17 is an ATP binding site; sequence ATGKST.

This sequence belongs to the CoaE family.

Its subcellular location is the cytoplasm. It carries out the reaction 3'-dephospho-CoA + ATP = ADP + CoA + H(+). It functions in the pathway cofactor biosynthesis; coenzyme A biosynthesis; CoA from (R)-pantothenate: step 5/5. Functionally, catalyzes the phosphorylation of the 3'-hydroxyl group of dephosphocoenzyme A to form coenzyme A. In Staphylococcus epidermidis (strain ATCC 12228 / FDA PCI 1200), this protein is Dephospho-CoA kinase.